Here is a 728-residue protein sequence, read N- to C-terminus: Phosphoribosylformylglycinamidine synthase subunit PurL (728 aa).

H54 is a catalytic residue. 2 residues coordinate ATP: Y57 and K96. E98 is a Mg(2+) binding site. Substrate contacts are provided by residues 99-102 (SHNH) and R121. The Proton acceptor role is filled by H100. D122 serves as a coordination point for Mg(2+). Position 245 (Q245) interacts with substrate. Mg(2+) is bound at residue D273. 317 to 319 (ETQ) lines the substrate pocket. ATP-binding residues include D495 and G532. Mg(2+) is bound at residue N533. A substrate-binding site is contributed by S535.

This sequence belongs to the FGAMS family. As to quaternary structure, monomer. Part of the FGAM synthase complex composed of 1 PurL, 1 PurQ and 2 PurS subunits.

The protein localises to the cytoplasm. It carries out the reaction N(2)-formyl-N(1)-(5-phospho-beta-D-ribosyl)glycinamide + L-glutamine + ATP + H2O = 2-formamido-N(1)-(5-O-phospho-beta-D-ribosyl)acetamidine + L-glutamate + ADP + phosphate + H(+). It functions in the pathway purine metabolism; IMP biosynthesis via de novo pathway; 5-amino-1-(5-phospho-D-ribosyl)imidazole from N(2)-formyl-N(1)-(5-phospho-D-ribosyl)glycinamide: step 1/2. Functionally, part of the phosphoribosylformylglycinamidine synthase complex involved in the purines biosynthetic pathway. Catalyzes the ATP-dependent conversion of formylglycinamide ribonucleotide (FGAR) and glutamine to yield formylglycinamidine ribonucleotide (FGAM) and glutamate. The FGAM synthase complex is composed of three subunits. PurQ produces an ammonia molecule by converting glutamine to glutamate. PurL transfers the ammonia molecule to FGAR to form FGAM in an ATP-dependent manner. PurS interacts with PurQ and PurL and is thought to assist in the transfer of the ammonia molecule from PurQ to PurL. The chain is Phosphoribosylformylglycinamidine synthase subunit PurL from Macrococcus caseolyticus (strain JCSC5402) (Macrococcoides caseolyticum).